Consider the following 514-residue polypeptide: SFRLSLSASTYAQRGSFTTPEHDFTLFPHRNHSVTSESRIPSEQTLKSLTDIPGNWRKNWLNVYYFWRSNGLNNAHQWMLDNFNKYGPIYREKIAYYESINIINPADAVIMNKSEGPFPKRIEMAPWVAYRDLRKENYGVQLLNGENWKRTRLILNNSIFAQSSIQRLVPLFNEVVLDFVSMVHKEVEKSRSDYWKTDLTNDLFKLALEVICYILYGERLDLLQRKYNKAPQKFIDSIATMFHSTPIMLYVPPSLLKSINSKIWQQHVGSWDNIFEHADTYLKKAYRQFQQGSKNEHAFPGVLTELLLQGALPFEDIRASIIDVMSGAIDTTSTTVHWMMYELAKHPHIQKNVRSEIMEAHQKTEGDPVKMLKSVPLLKCVVKETLRLYPVAISIQRYLNEDTVLQNYHIPAGTLVQLGLYAMGRNPKIFKNPEQYNPERWLKGEDTHFRHLGFGFGPRQCIGRRIAETQMVLLMIHMLQNFKIETDPMTEVKSKFSLILIPDKPINLKFTPIK.

The transit peptide at 1 to 39 (SFRLSLSASTYAQRGSFTTPEHDFTLFPHRNHSVTSESR) directs the protein to the mitochondrion. C461 provides a ligand contact to heme.

This sequence belongs to the cytochrome P450 family. Heme serves as cofactor.

The protein localises to the mitochondrion inner membrane. The enzyme catalyses 6 reduced [adrenodoxin] + cholesterol + 3 O2 + 6 H(+) = 4-methylpentanal + pregnenolone + 6 oxidized [adrenodoxin] + 4 H2O. It participates in lipid metabolism; C21-steroid hormone metabolism. Its function is as follows. Catalyzes the side-chain cleavage reaction of cholesterol to pregnenolone, the precursor of most steroid hormones. The chain is Cholesterol side-chain cleavage enzyme, mitochondrial (CYP11A1) from Hypanus americanus (Southern stingray).